Consider the following 387-residue polypeptide: Galactokinase (387 aa).

33–36 lines the substrate pocket; it reads EHID. Residues S67 and 124 to 130 each bind ATP; that span reads GAGLSSS. Residues S130 and E162 each coordinate Mg(2+). D174 (proton acceptor) is an active-site residue. Residue Y224 participates in substrate binding.

The protein belongs to the GHMP kinase family. GalK subfamily.

The protein localises to the cytoplasm. The enzyme catalyses alpha-D-galactose + ATP = alpha-D-galactose 1-phosphate + ADP + H(+). It participates in carbohydrate metabolism; galactose metabolism. Functionally, catalyzes the transfer of the gamma-phosphate of ATP to D-galactose to form alpha-D-galactose-1-phosphate (Gal-1-P). The sequence is that of Galactokinase from Clostridium perfringens (strain ATCC 13124 / DSM 756 / JCM 1290 / NCIMB 6125 / NCTC 8237 / Type A).